The sequence spans 180 residues: Protein GrpE (180 aa).

Residues 1 to 21 are disordered; that stretch reads MSEEVKEQNLPEVEPVQEAAS.

Belongs to the GrpE family. As to quaternary structure, homodimer.

The protein resides in the cytoplasm. In terms of biological role, participates actively in the response to hyperosmotic and heat shock by preventing the aggregation of stress-denatured proteins, in association with DnaK and GrpE. It is the nucleotide exchange factor for DnaK and may function as a thermosensor. Unfolded proteins bind initially to DnaJ; upon interaction with the DnaJ-bound protein, DnaK hydrolyzes its bound ATP, resulting in the formation of a stable complex. GrpE releases ADP from DnaK; ATP binding to DnaK triggers the release of the substrate protein, thus completing the reaction cycle. Several rounds of ATP-dependent interactions between DnaJ, DnaK and GrpE are required for fully efficient folding. The sequence is that of Protein GrpE from Campylobacter concisus (strain 13826).